We begin with the raw amino-acid sequence, 1112 residues long: Carbamoyl phosphate synthase large chain (1112 aa).

Residues 1-407 (MPRRTDLRHV…ALGKVMRSLE (407 aa)) are carboxyphosphate synthetic domain. 12 residues coordinate ATP: arginine 134, arginine 174, glycine 180, glycine 181, glutamate 213, isoleucine 215, glutamate 220, glycine 246, valine 247, histidine 248, glutamine 290, and glutamate 304. An ATP-grasp 1 domain is found at 138 to 333 (KDIVTKVGGE…IAKIAAKLAI (196 aa)). Mg(2+) is bound by residues glutamine 290, glutamate 304, and asparagine 306. The Mn(2+) site is built by glutamine 290, glutamate 304, and asparagine 306. Residues 408-559 (TGRAGFWTAP…ELDPAAESEV (152 aa)) are oligomerization domain. The segment at 560 to 965 (APQAERPKVL…AFAKSQTAAY (406 aa)) is carbamoyl phosphate synthetic domain. One can recognise an ATP-grasp 2 domain in the interval 693–884 (GEVLRTAGLP…LAKACARIML (192 aa)). 10 residues coordinate ATP: arginine 729, arginine 768, leucine 770, glutamate 775, glycine 800, isoleucine 801, histidine 802, serine 803, glutamine 843, and glutamate 855. Residues glutamine 843, glutamate 855, and asparagine 857 each coordinate Mg(2+). Residues glutamine 843, glutamate 855, and asparagine 857 each contribute to the Mn(2+) site. Positions 966–1112 (GSLPSEGTVF…LQELHSELGN (147 aa)) constitute an MGS-like domain. The segment at 966-1112 (GSLPSEGTVF…LQELHSELGN (147 aa)) is allosteric domain.

It belongs to the CarB family. In terms of assembly, composed of two chains; the small (or glutamine) chain promotes the hydrolysis of glutamine to ammonia, which is used by the large (or ammonia) chain to synthesize carbamoyl phosphate. Tetramer of heterodimers (alpha,beta)4. It depends on Mg(2+) as a cofactor. Mn(2+) serves as cofactor.

It catalyses the reaction hydrogencarbonate + L-glutamine + 2 ATP + H2O = carbamoyl phosphate + L-glutamate + 2 ADP + phosphate + 2 H(+). It carries out the reaction hydrogencarbonate + NH4(+) + 2 ATP = carbamoyl phosphate + 2 ADP + phosphate + 2 H(+). It participates in amino-acid biosynthesis; L-arginine biosynthesis; carbamoyl phosphate from bicarbonate: step 1/1. Its pathway is pyrimidine metabolism; UMP biosynthesis via de novo pathway; (S)-dihydroorotate from bicarbonate: step 1/3. In terms of biological role, large subunit of the glutamine-dependent carbamoyl phosphate synthetase (CPSase). CPSase catalyzes the formation of carbamoyl phosphate from the ammonia moiety of glutamine, carbonate, and phosphate donated by ATP, constituting the first step of 2 biosynthetic pathways, one leading to arginine and/or urea and the other to pyrimidine nucleotides. The large subunit (synthetase) binds the substrates ammonia (free or transferred from glutamine from the small subunit), hydrogencarbonate and ATP and carries out an ATP-coupled ligase reaction, activating hydrogencarbonate by forming carboxy phosphate which reacts with ammonia to form carbamoyl phosphate. The polypeptide is Carbamoyl phosphate synthase large chain (Mycobacterium sp. (strain JLS)).